The primary structure comprises 438 residues: Coenzyme A disulfide reductase (438 aa).

8–33 (GAVAGGATCASQIRRLDKESDIIIFE) contributes to the FAD binding site. Residues T15, Q19, R22, S39, and N42 each contribute to the substrate site. C43 (nucleophile) is an active-site residue. C43 acts as the Redox-active in catalysis. Residue K71 coordinates substrate. 151 to 166 (VLVVGAGYVSLEVLEN) is an NADP(+) binding site. 267 to 277 (TNVPNIYAIGD) contributes to the FAD binding site. Position 299 (H299) interacts with substrate. Y419 serves as a coordination point for FAD. K427 contributes to the substrate binding site.

Belongs to the class-III pyridine nucleotide-disulfide oxidoreductase family. In terms of assembly, homodimer. FAD serves as cofactor.

It catalyses the reaction NADP(+) + 2 CoA = CoA-disulfide + NADPH + H(+). Functionally, catalyzes specifically the NADPH-dependent reduction of coenzyme A disulfide. The sequence is that of Coenzyme A disulfide reductase from Staphylococcus aureus (strain USA300).